The primary structure comprises 305 residues: UDP-3-O-acyl-N-acetylglucosamine deacetylase (305 aa).

Zn(2+) contacts are provided by His78, His237, and Asp241. The active-site Proton donor is the His264.

The protein belongs to the LpxC family. Requires Zn(2+) as cofactor.

The enzyme catalyses a UDP-3-O-[(3R)-3-hydroxyacyl]-N-acetyl-alpha-D-glucosamine + H2O = a UDP-3-O-[(3R)-3-hydroxyacyl]-alpha-D-glucosamine + acetate. The protein operates within glycolipid biosynthesis; lipid IV(A) biosynthesis; lipid IV(A) from (3R)-3-hydroxytetradecanoyl-[acyl-carrier-protein] and UDP-N-acetyl-alpha-D-glucosamine: step 2/6. In terms of biological role, catalyzes the hydrolysis of UDP-3-O-myristoyl-N-acetylglucosamine to form UDP-3-O-myristoylglucosamine and acetate, the committed step in lipid A biosynthesis. This is UDP-3-O-acyl-N-acetylglucosamine deacetylase from Dechloromonas aromatica (strain RCB).